Consider the following 81-residue polypeptide: Photosystem I iron-sulfur center (81 aa).

4Fe-4S ferredoxin-type domains lie at 2–31 and 39–68; these read AHTVKIYDNCIGCTQCVRACPLDVLEMVPW and MASAPRTEDCVGCKRCETACPTDFLSIRVY. Positions 11, 14, 17, 21, 48, 51, 54, and 58 each coordinate [4Fe-4S] cluster.

In terms of assembly, the eukaryotic PSI reaction center is composed of at least 11 subunits. [4Fe-4S] cluster is required as a cofactor.

It localises to the plastid. It is found in the chloroplast thylakoid membrane. The enzyme catalyses reduced [plastocyanin] + hnu + oxidized [2Fe-2S]-[ferredoxin] = oxidized [plastocyanin] + reduced [2Fe-2S]-[ferredoxin]. Its function is as follows. Apoprotein for the two 4Fe-4S centers FA and FB of photosystem I (PSI); essential for photochemical activity. FB is the terminal electron acceptor of PSI, donating electrons to ferredoxin. The C-terminus interacts with PsaA/B/D and helps assemble the protein into the PSI complex. Required for binding of PsaD and PsaE to PSI. PSI is a plastocyanin/cytochrome c6-ferredoxin oxidoreductase, converting photonic excitation into a charge separation, which transfers an electron from the donor P700 chlorophyll pair to the spectroscopically characterized acceptors A0, A1, FX, FA and FB in turn. In Cyanidioschyzon merolae (strain NIES-3377 / 10D) (Unicellular red alga), this protein is Photosystem I iron-sulfur center.